The primary structure comprises 364 residues: DNA primase large subunit PriL (364 aa).

Residues C237, C309, C318, and C325 each coordinate [4Fe-4S] cluster. The tract at residues 345–364 (MQNDNEKGHEEKKEGETPPQ) is disordered.

The protein belongs to the eukaryotic-type primase large subunit family. As to quaternary structure, heterodimer of a small subunit (PriS) and a large subunit (PriL). [4Fe-4S] cluster serves as cofactor.

Its function is as follows. Regulatory subunit of DNA primase, an RNA polymerase that catalyzes the synthesis of short RNA molecules used as primers for DNA polymerase during DNA replication. Stabilizes and modulates the activity of the small subunit, increasing the rate of DNA synthesis, and conferring RNA synthesis capability. The DNA polymerase activity may enable DNA primase to also catalyze primer extension after primer synthesis. May also play a role in DNA repair. The chain is DNA primase large subunit PriL from Methanococcoides burtonii (strain DSM 6242 / NBRC 107633 / OCM 468 / ACE-M).